A 212-amino-acid polypeptide reads, in one-letter code: Translation initiation factor IF-3 (212 aa).

Residues 190 to 203 are compositionally biased toward basic and acidic residues; the sequence is LVDKNSDSQDKSVS. The interval 190–212 is disordered; that stretch reads LVDKNSDSQDKSVSEEDTNEGEQ.

Belongs to the IF-3 family. In terms of assembly, monomer.

Its subcellular location is the cytoplasm. In terms of biological role, IF-3 binds to the 30S ribosomal subunit and shifts the equilibrium between 70S ribosomes and their 50S and 30S subunits in favor of the free subunits, thus enhancing the availability of 30S subunits on which protein synthesis initiation begins. The chain is Translation initiation factor IF-3 from Mycoplasmopsis fermentans (Mycoplasma fermentans).